Reading from the N-terminus, the 257-residue chain is Thiazole synthase (257 aa).

Catalysis depends on lysine 96, which acts as the Schiff-base intermediate with DXP. 1-deoxy-D-xylulose 5-phosphate-binding positions include glycine 157, 184–185 (AG), and 206–207 (NT).

Belongs to the ThiG family. As to quaternary structure, homotetramer. Forms heterodimers with either ThiH or ThiS.

It localises to the cytoplasm. The enzyme catalyses [ThiS sulfur-carrier protein]-C-terminal-Gly-aminoethanethioate + 2-iminoacetate + 1-deoxy-D-xylulose 5-phosphate = [ThiS sulfur-carrier protein]-C-terminal Gly-Gly + 2-[(2R,5Z)-2-carboxy-4-methylthiazol-5(2H)-ylidene]ethyl phosphate + 2 H2O + H(+). It participates in cofactor biosynthesis; thiamine diphosphate biosynthesis. Functionally, catalyzes the rearrangement of 1-deoxy-D-xylulose 5-phosphate (DXP) to produce the thiazole phosphate moiety of thiamine. Sulfur is provided by the thiocarboxylate moiety of the carrier protein ThiS. In vitro, sulfur can be provided by H(2)S. The polypeptide is Thiazole synthase (Rhizobium meliloti (strain 1021) (Ensifer meliloti)).